The sequence spans 228 residues: Heat shock 70-related protein 4 (228 aa).

A disordered region spans residues 57 to 80; that stretch reads RWHEPPGNTVFDEAHDRPQVRRPD. The span at 68-80 shows a compositional bias: basic and acidic residues; that stretch reads DEAHDRPQVRRPD.

Belongs to the heat shock protein 70 family.

This is Heat shock 70-related protein 4 (HSP70.4) from Leishmania major.